A 495-amino-acid polypeptide reads, in one-letter code: Meiosis-specific nuclear structural protein 1 (495 aa).

Positions methionine 1–glutamate 314 are interaction with BBOF1. Residues leucine 59–lysine 410 adopt a coiled-coil conformation. Position 188 is a phosphotyrosine (tyrosine 188).

Belongs to the MNS1 family. Able to form oligomers. Microtubule inner protein component of sperm flagellar doublet microtubules. Interacts with ODAD1. Interacts with BBOF1.

Its subcellular location is the nucleus. It is found in the cytoplasm. It localises to the cytoskeleton. The protein resides in the cilium axoneme. The protein localises to the flagellum axoneme. Functionally, microtubule inner protein (MIP) part of the dynein-decorated doublet microtubules (DMTs) in cilia axoneme, which is required for motile cilia beating. May play a role in the control of meiotic division and germ cell differentiation through regulation of pairing and recombination during meiosis. Required for sperm flagella assembly. May play a role in the assembly and function of the outer dynein arm-docking complex (ODA-DC). ODA-DC mediates outer dynein arms (ODA) binding onto the axonemal doublet microtubules. The polypeptide is Meiosis-specific nuclear structural protein 1 (MNS1) (Macaca fascicularis (Crab-eating macaque)).